A 171-amino-acid polypeptide reads, in one-letter code: Disulfide bond formation protein B (171 aa).

The Cytoplasmic segment spans residues 1–13 (MTFISNLADTRLA). A helical membrane pass occupies residues 14–30 (WGLLFLSALVLVAYALF). Residues 31–48 (SQHAMGLQPCIMCIYQRT) lie on the Periplasmic side of the membrane. Cysteine 40 and cysteine 43 are oxidised to a cystine. The helical transmembrane segment at 49-63 (AIFGIMFACVPVLAA) threads the bilayer. Over 64–70 (NNMLTRL) the chain is Cytoplasmic. The helical transmembrane segment at 71-88 (FAFTVWGISAIWGGLIAW) threads the bilayer. Over 89–144 (EHYDIQNAANPFFATCEIVPNFPSWLPLHEWLPNLFAATGDCGNIDWVFMDMSMPQ) the chain is Periplasmic. A disulfide bridge links cysteine 104 with cysteine 130. Residues 145 to 163 (WMMVVFAIYSSIWFVVLAS) traverse the membrane as a helical segment. Topologically, residues 164 to 171 (RLIGNRAI) are cytoplasmic.

This sequence belongs to the DsbB family.

The protein resides in the cell inner membrane. Functionally, required for disulfide bond formation in some periplasmic proteins. Acts by oxidizing the DsbA protein. In Pseudoalteromonas atlantica (strain T6c / ATCC BAA-1087), this protein is Disulfide bond formation protein B.